The primary structure comprises 736 residues: Zinc finger CCCH domain-containing protein 14 (736 aa).

N-acetylmethionine is present on methionine 1. Polar residues-rich tracts occupy residues 77-103 (TTEPSSLKSSDTNIFDSNVPSNKSNFS) and 131-145 (VSTSSQESKTTNVRQ). A disordered region spans residues 77–145 (TTEPSSLKSS…QESKTTNVRQ (69 aa)). Position 85 is a phosphoserine (serine 85). Glycyl lysine isopeptide (Lys-Gly) (interchain with G-Cter in SUMO2) cross-links involve residues lysine 99, lysine 139, lysine 175, and lysine 198. At serine 240 the chain carries Phosphoserine. Residue lysine 245 forms a Glycyl lysine isopeptide (Lys-Gly) (interchain with G-Cter in SUMO2) linkage. At serine 281 the chain carries Phosphoserine. Residues lysine 283 and lysine 295 each participate in a glycyl lysine isopeptide (Lys-Gly) (interchain with G-Cter in SUMO2) cross-link. A disordered region spans residues 310 to 350 (HDGEEEEEDDDYGSRTGSISSSVSVPAKPERRPSLPPSKQA). Serine 327 and serine 343 each carry phosphoserine. Position 357 is an N6-acetyllysine; alternate (lysine 357). Residue lysine 357 forms a Glycyl lysine isopeptide (Lys-Gly) (interchain with G-Cter in SUMO2); alternate linkage. Lysine 378 is covalently cross-linked (Glycyl lysine isopeptide (Lys-Gly) (interchain with G-Cter in SUMO2)). 2 positions are modified to phosphoserine: serine 390 and serine 409. The segment at 398 to 430 (VVQGQSRTPRISPPIKEEETKGDSVEKNQGTQQ) is disordered. Positions 412-423 (IKEEETKGDSVE) are enriched in basic and acidic residues. A Glycyl lysine isopeptide (Lys-Gly) (interchain with G-Cter in SUMO2) cross-link involves residue lysine 413. The residue at position 421 (serine 421) is a Phosphoserine. Lysine 489 is covalently cross-linked (Glycyl lysine isopeptide (Lys-Gly) (interchain with G-Cter in SUMO2)). Serine 498, serine 515, serine 527, and serine 620 each carry phosphoserine. 5 C3H1-type zinc fingers span residues 595–620 (EKLLERCKYWPACKNGDECAYHHPIS), 621–640 (PCKAFPNCKFAEKCLFVHPN), 641–656 (CKYDAKCTKPDCPFTH), 682–699 (CRYFPACKKMECPFYHPK), and 701–719 (CRFNTQCTRPDCTFYHPTI).

It belongs to the ZC3H14 family. As to quaternary structure, homodimer; facilitating circular RNAs (circRNAs) formation. Associates with the spliceosome. Interacts with HOOK2. Interacts with ZFC3H1 in a RNase-sensitive manner. As to expression, expressed in fetal and adult brain. Expressed in fetal and adult temporal lobe.

It localises to the nucleus speckle. Its subcellular location is the cytoplasm. RNA-binding protein involved in the biogenesis of circular RNAs (circRNAs), which are produced by back-splicing circularization of pre-mRNAs. Acts by binding to both exon-intron boundary and 3'-UTR of pre-mRNAs to promote circRNA biogenesis through dimerization and the association with the spliceosome. Required for spermatogenesis via involvement in circRNA biogenesis. Regulates the pre-mRNA processing of ATP5MC1; preventing its degradation. Also binds the poly(A) tail of mRNAs; controlling poly(A) length in neuronal cells. This chain is Zinc finger CCCH domain-containing protein 14, found in Homo sapiens (Human).